We begin with the raw amino-acid sequence, 260 residues long: NifU-like protein C1709.19c (260 aa).

Residues 161–231 (IKELIETSIR…IPEVENVVQV (71 aa)) are nifU.

The protein belongs to the NifU family.

The protein is NifU-like protein C1709.19c of Schizosaccharomyces pombe (strain 972 / ATCC 24843) (Fission yeast).